The following is a 604-amino-acid chain: UvrABC system protein C (604 aa).

Positions 10–89 (ELPGVYLMKD…VKKNRPHYNI (80 aa)) constitute a GIY-YIG domain. The 36-residue stretch at 199 to 234 (SGTIKELQEKMNIHAIAQEYESAAVIRDQIDALKSL) folds into the UVR domain.

It belongs to the UvrC family. As to quaternary structure, interacts with UvrB in an incision complex.

The protein localises to the cytoplasm. The UvrABC repair system catalyzes the recognition and processing of DNA lesions. UvrC both incises the 5' and 3' sides of the lesion. The N-terminal half is responsible for the 3' incision and the C-terminal half is responsible for the 5' incision. This is UvrABC system protein C from Methanococcoides burtonii (strain DSM 6242 / NBRC 107633 / OCM 468 / ACE-M).